A 763-amino-acid polypeptide reads, in one-letter code: Disintegrin and metalloproteinase domain-containing protein 29 (763 aa).

The first 31 residues, 1-31, serve as a signal peptide directing secretion; sequence MNMIEALLSMRVLFLTQVFGIFLCFPGLTKA. The propeptide occupies 32–200; that stretch reads GHLHYHSSIE…ILKQSSFEDW (169 aa). Residues asparagine 164, asparagine 177, and asparagine 223 are each glycosylated (N-linked (GlcNAc...) asparagine). Topologically, residues 201–684 are extracellular; it reads WTHTKIVELV…KTNKKKHFFY (484 aa). One can recognise a Peptidase M12B domain in the interval 205 to 396; that stretch reads KIVELVVVVD…NTRCLMENMY (192 aa). 3 disulfides stabilise this stretch: cysteine 313–cysteine 390, cysteine 353–cysteine 375, and cysteine 355–cysteine 360. Residues asparagine 374, asparagine 424, asparagine 434, asparagine 475, and asparagine 584 are each glycosylated (N-linked (GlcNAc...) asparagine). The region spanning 403–489 is the Disintegrin domain; the sequence is RTRCGNGVVE…ECPDDAYVED (87 aa). Cysteine 461 and cysteine 481 form a disulfide bridge. 3 disulfide bridges follow: cysteine 631–cysteine 642, cysteine 636–cysteine 648, and cysteine 650–cysteine 659. The 30-residue stretch at 631–660 folds into the EGF-like domain; that stretch reads CTPAFCNYRGICNNKHHCHCNFHWDPPNCM. The helical transmembrane segment at 685–705 threads the bilayer; the sequence is LLLLQLIILACLLSCLLWLLF. Residues 706-763 are Cytoplasmic-facing; sequence NIKGSKRKPQVQPTPVKTKKVSKKVPSQKPSPVPSPSLPQLRMPSRSASPTSSIKSTN. The tract at residues 712-763 is disordered; sequence RKPQVQPTPVKTKKVSKKVPSQKPSPVPSPSLPQLRMPSRSASPTSSIKSTN. Residues 751-763 are compositionally biased toward polar residues; the sequence is RSASPTSSIKSTN.

The protein localises to the membrane. In terms of biological role, may be involved in spermatogenesis and fertilization. Seems to be a non catalytic metalloprotease-like protein. The chain is Disintegrin and metalloproteinase domain-containing protein 29 (Adam29) from Mus musculus (Mouse).